The chain runs to 389 residues: Nuclear receptor subfamily 2 group F member 1-B (389 aa).

Positions 19 to 39 are disordered; that stretch reads DDQSAAGREHLQHRHSPKSAE. The nuclear receptor DNA-binding region spans 51–126; sequence HVECVVCGDK…VGMRREAVQR (76 aa). NR C4-type zinc fingers lie at residues 54-74 and 90-109; these read CVVC…CEGC and CRAN…CQYC. In terms of domain architecture, NR LBD spans 152–378; sequence YLSGYISLLL…TLIRDMLLSG (227 aa).

Belongs to the nuclear hormone receptor family. NR2 subfamily. In terms of tissue distribution, expressed the retina, where expression is restricted to the outer nuclear layer.

The protein resides in the nucleus. Putative transcription factor that is required in photoreceptor cells precursors during eye development. This Danio rerio (Zebrafish) protein is Nuclear receptor subfamily 2 group F member 1-B.